We begin with the raw amino-acid sequence, 977 residues long: Glycine dehydrogenase (decarboxylating) (977 aa).

The residue at position 702 (Lys-702) is an N6-(pyridoxal phosphate)lysine.

It belongs to the GcvP family. In terms of assembly, the glycine cleavage system is composed of four proteins: P, T, L and H. Pyridoxal 5'-phosphate serves as cofactor.

The enzyme catalyses N(6)-[(R)-lipoyl]-L-lysyl-[glycine-cleavage complex H protein] + glycine + H(+) = N(6)-[(R)-S(8)-aminomethyldihydrolipoyl]-L-lysyl-[glycine-cleavage complex H protein] + CO2. In terms of biological role, the glycine cleavage system catalyzes the degradation of glycine. The P protein binds the alpha-amino group of glycine through its pyridoxal phosphate cofactor; CO(2) is released and the remaining methylamine moiety is then transferred to the lipoamide cofactor of the H protein. In Xanthomonas axonopodis pv. citri (strain 306), this protein is Glycine dehydrogenase (decarboxylating).